Reading from the N-terminus, the 1052-residue chain is Membrane-bound transcription factor site-1 protease (1052 aa).

The N-terminal stretch at Met-1–Gly-17 is a signal peptide. The propeptide occupies Lys-18 to Leu-186. Ser-168 carries the phosphoserine; by FAM20C modification. The Lumenal segment spans residues Arg-187–Val-998. The region spanning Pro-190–Tyr-472 is the Peptidase S8 domain. Catalysis depends on Asp-218, which acts as the Charge relay system. An N-linked (GlcNAc...) asparagine glycan is attached at Asn-236. Catalysis depends on His-249, which acts as the Charge relay system. Asn-305 is a glycosylation site (N-linked (GlcNAc...) asparagine). Ser-414 (charge relay system) is an active-site residue. Residues Asn-515 and Asn-728 are each glycosylated (N-linked (GlcNAc...) asparagine). Over residues Pro-877 to Arg-887 the composition is skewed to polar residues. The tract at residues Pro-877–Arg-899 is disordered. Asn-939 is a glycosylation site (N-linked (GlcNAc...) asparagine). Residues Gly-999 to Ile-1021 traverse the membrane as a helical segment. At Asn-1022–Val-1052 the chain is on the cytoplasmic side. A compositionally biased stretch (basic residues) spans Arg-1027–Arg-1037. The disordered stretch occupies residues Arg-1027 to Val-1052.

It belongs to the peptidase S8 family. Interacts with LYSET; this interaction bridges GNPTAB to MBTPS1. Ca(2+) is required as a cofactor. Post-translationally, the 148 kDa zymogen is processed progressively into two membrane-bound 120 and 106 kDa forms in the endoplasmic reticulum, and late into a secreted 98 kDa form. The propeptide is autocatalytically removed through an intramolecular cleavage after Leu-186. Further cleavage generates 14, 10, and 8 kDa intermediates. As to expression, widely expressed.

Its subcellular location is the endoplasmic reticulum membrane. The protein resides in the golgi apparatus membrane. It catalyses the reaction Processes precursors containing basic and hydrophobic/aliphatic residues at P4 and P2, respectively, with a relatively relaxed acceptance of amino acids at P1 and P3.. Inhibited by divalent copper and zinc ions, but not by nickel or cobalt. Inhibited by its prosegment, but not smaller fragments. Inhibited by 4-(2-aminoethyl)benzenesulfonyl fluoride (AEBSF), a serine protease inhibitor. In terms of biological role, serine protease that cleaves after hydrophobic or small residues, provided that Arg or Lys is in position P4: known substrates include SREBF1/SREBP1, SREBF2/SREBP2, BDNF, GNPTAB, ATF6, ATF6B and FAM20C. Cleaves substrates after Arg-Ser-Val-Leu (SREBP2), Arg-His-Leu-Leu (ATF6), Arg-Gly-Leu-Thr (BDNF) and its own propeptide after Arg-Arg-Leu-Leu. Catalyzes the first step in the proteolytic activation of the sterol regulatory element-binding proteins (SREBPs) SREBF1/SREBP1 and SREBF2/SREBP2. Also mediates the first step in the proteolytic activation of the cyclic AMP-dependent transcription factor ATF-6 (ATF6 and ATF6B). Mediates the protein cleavage of GNPTAB into subunit alpha and beta, thereby participating in biogenesis of lysosomes. Cleaves the propeptide from FAM20C which is required for FAM20C secretion from the Golgi apparatus membrane and for enhancement of FAM20C kinase activity, promoting osteoblast differentiation and biomineralization. Involved in the regulation of M6P-dependent Golgi-to-lysosome trafficking of lysosomal enzymes. It is required for the activation of CREB3L2/BBF2H7, a transcriptional activator of MIA3/TANGO and other genes controlling mega vesicle formation. Therefore, it plays a key role in the regulation of mega vesicle-mediated collagen trafficking. In astrocytes and osteoblasts, upon DNA damage and ER stress, mediates the first step of the regulated intramembrane proteolytic activation of the transcription factor CREB3L1, leading to the inhibition of cell-cycle progression. The protein is Membrane-bound transcription factor site-1 protease of Homo sapiens (Human).